A 292-amino-acid polypeptide reads, in one-letter code: Ribosomal protein L11 methyltransferase (292 aa).

Residues Thr145, Gly166, Asp188, and Asn229 each contribute to the S-adenosyl-L-methionine site.

This sequence belongs to the methyltransferase superfamily. PrmA family.

It localises to the cytoplasm. It catalyses the reaction L-lysyl-[protein] + 3 S-adenosyl-L-methionine = N(6),N(6),N(6)-trimethyl-L-lysyl-[protein] + 3 S-adenosyl-L-homocysteine + 3 H(+). Its function is as follows. Methylates ribosomal protein L11. This Alteromonas mediterranea (strain DSM 17117 / CIP 110805 / LMG 28347 / Deep ecotype) protein is Ribosomal protein L11 methyltransferase.